The sequence spans 264 residues: Molybdenum transport system permease protein ModB (264 aa).

Transmembrane regions (helical) follow at residues 11-31 (VYLP…AIAI), 57-77 (TAAA…LVLA), 90-110 (LILL…LYAF), 127-147 (IAFS…PYLV), 176-196 (WWRV…VLAF), and 234-254 (AAVA…LGVG). The ABC transmembrane type-1 domain maps to 51–253 (LLLSVKTAAA…VVAALVVLGV (203 aa)).

This sequence belongs to the binding-protein-dependent transport system permease family. CysTW subfamily.

It is found in the cell membrane. Functionally, part of the binding-protein-dependent transport system ModABCD for molybdenum; probably responsible for the translocation of the substrate across the membrane. The protein is Molybdenum transport system permease protein ModB (modB) of Mycobacterium bovis (strain ATCC BAA-935 / AF2122/97).